The chain runs to 388 residues: Succinate--CoA ligase [ADP-forming] subunit beta (388 aa).

The ATP-grasp domain occupies K9–Q244. ATP contacts are provided by residues K46, G53–G55, E99, T102, and E107. The Mg(2+) site is built by N199 and D213. Substrate is bound by residues N264 and G321–V323.

This sequence belongs to the succinate/malate CoA ligase beta subunit family. As to quaternary structure, heterotetramer of two alpha and two beta subunits. The cofactor is Mg(2+).

It carries out the reaction succinate + ATP + CoA = succinyl-CoA + ADP + phosphate. The catalysed reaction is GTP + succinate + CoA = succinyl-CoA + GDP + phosphate. Its pathway is carbohydrate metabolism; tricarboxylic acid cycle; succinate from succinyl-CoA (ligase route): step 1/1. Succinyl-CoA synthetase functions in the citric acid cycle (TCA), coupling the hydrolysis of succinyl-CoA to the synthesis of either ATP or GTP and thus represents the only step of substrate-level phosphorylation in the TCA. The beta subunit provides nucleotide specificity of the enzyme and binds the substrate succinate, while the binding sites for coenzyme A and phosphate are found in the alpha subunit. This Photorhabdus laumondii subsp. laumondii (strain DSM 15139 / CIP 105565 / TT01) (Photorhabdus luminescens subsp. laumondii) protein is Succinate--CoA ligase [ADP-forming] subunit beta.